The following is a 41-amino-acid chain: Cuticle protein 32 (41 aa).

Repeat copies occupy residues 17–20 (AAPA), 25–28 (AAPA), 31–34 (AAPA), and 38–41 (AAPA).

Component of the cuticle of migratory locust which contains more than 100 different structural proteins. In Locusta migratoria (Migratory locust), this protein is Cuticle protein 32.